A 180-amino-acid polypeptide reads, in one-letter code: Segregation and condensation protein B (180 aa).

It belongs to the ScpB family. In terms of assembly, homodimer. Homodimerization may be required to stabilize the binding of ScpA to the Smc head domains. Component of a cohesin-like complex composed of ScpA, ScpB and the Smc homodimer, in which ScpA and ScpB bind to the head domain of Smc. The presence of the three proteins is required for the association of the complex with DNA.

It localises to the cytoplasm. In terms of biological role, participates in chromosomal partition during cell division. May act via the formation of a condensin-like complex containing Smc and ScpA that pull DNA away from mid-cell into both cell halves. The chain is Segregation and condensation protein B from Staphylococcus aureus (strain USA300).